We begin with the raw amino-acid sequence, 175 residues long: Polyadenylate-binding protein-interacting protein 6 (175 aa).

The short motif at 7-17 (TLNPYAAAYVP) is the PAM2-like element. The CUE domain maps to 83–126 (EMDMDIEYLLATYPGLSQESINDVYLANTCDLDATIEMLNQLEI). The tract at residues 145 to 175 (PEIITESSKQKNDGSSASSSSGIRNANVSSS) is disordered. Over residues 166-175 (GIRNANVSSS) the composition is skewed to polar residues.

The chain is Polyadenylate-binding protein-interacting protein 6 (CID6) from Arabidopsis thaliana (Mouse-ear cress).